Here is a 314-residue protein sequence, read N- to C-terminus: Lysophospholipase D GDPD1 (314 aa).

Residues 1 to 3 (MSS) lie on the Extracellular side of the membrane. A helical membrane pass occupies residues 4–24 (TAAFCLLSTLGGYLVTSFLLL). Residues 25–195 (KYPALLHQRK…VDKCYKENSD (171 aa)) lie on the Cytoplasmic side of the membrane. In terms of domain architecture, GP-PDE spans 40–309 (SRHISHRGGA…DYPTKLKEFL (270 aa)). Residues Glu72, Asp74, and His87 each contribute to the a divalent metal cation site. A helical membrane pass occupies residues 196–216 (IPILFSLQRVLLILGLFFTGL). At 217–314 (LPFVPIREQF…LKEFLNNMSA (98 aa)) the chain is on the extracellular side.

This sequence belongs to the glycerophosphoryl diester phosphodiesterase family.

It is found in the cytoplasm. Its subcellular location is the membrane. The protein localises to the perinuclear region. It localises to the endoplasmic reticulum. The catalysed reaction is a 1-O-alkyl-sn-glycero-3-phosphocholine + H2O = a 1-O-alkyl-sn-glycero-3-phosphate + choline + H(+). It carries out the reaction 1-hexadecanoyl-sn-glycero-3-phosphocholine + H2O = 1-hexadecanoyl-sn-glycero-3-phosphate + choline + H(+). It catalyses the reaction 1-hexadecanoyl-sn-glycero-3-phosphoethanolamine + H2O = 1-hexadecanoyl-sn-glycero-3-phosphate + ethanolamine + H(+). The enzyme catalyses N-hexadecanoyl-sn-glycero-3-phosphoethanolamine + H2O = N-hexadecanoylethanolamine + sn-glycerol 3-phosphate + H(+). The catalysed reaction is N-(5Z,8Z,11Z,14Z-eicosatetraenoyl)-1-(9Z-octadecenoyl)-sn-glycero-3-phosphoethanolamine + H2O = N-(5Z,8Z,11Z,14Z-eicosatetraenoyl)-ethanolamine + 1-(9Z-octadecenoyl)-sn-glycero-3-phosphate + H(+). It carries out the reaction N,1-di-(9Z-octadecenoyl)-sn-glycero-3-phosphoethanolamine + H2O = N-(9Z-octadecenoyl) ethanolamine + 1-(9Z-octadecenoyl)-sn-glycero-3-phosphate + H(+). It catalyses the reaction N-hexadecanoyl-1-(9Z-octadecenoyl)-sn-glycero-3-phosphoethanolamine + H2O = N-hexadecanoylethanolamine + 1-(9Z-octadecenoyl)-sn-glycero-3-phosphate + H(+). The enzyme catalyses 1-O-hexadecyl-sn-glycero-3-phosphocholine + H2O = 1-O-hexadecyl-sn-glycero-3-phosphate + choline + H(+). The catalysed reaction is 1-(9Z-octadecenoyl)-sn-glycero-3-phosphocholine + H2O = 1-(9Z-octadecenoyl)-sn-glycero-3-phosphate + choline + H(+). It carries out the reaction N,1-dihexadecanoyl-sn-glycero-3-phosphoethanolamine + H2O = N-hexadecanoylethanolamine + 1-hexadecanoyl-sn-glycero-3-phosphate + H(+). It catalyses the reaction 1-O-(1Z-octadecenyl)-sn-glycero-3-phospho-(N-5Z,8Z,11Z,14Z-eicosatetraenoyl)-ethanolamine + H2O = 1-O-(1Z-octadecenyl)-sn-glycero-3-phosphate + N-(5Z,8Z,11Z,14Z-eicosatetraenoyl)-ethanolamine + H(+). The enzyme catalyses 1-O-(1Z-octadecenyl)-sn-glycero-3-phospho-(N-9Z-octadecenoyl)-ethanolamine + H2O = 1-O-(1Z-octadecenyl)-sn-glycero-3-phosphate + N-(9Z-octadecenoyl) ethanolamine + H(+). The catalysed reaction is 1-O-(1Z-octadecenyl)-sn-glycero-3-phospho-N-hexadecanoyl-ethanolamine + H2O = 1-O-(1Z-octadecenyl)-sn-glycero-3-phosphate + N-hexadecanoylethanolamine + H(+). With respect to regulation, lysophospholipase D activity is increased by magnesium and manganese and inhibited by calcium in a concentration dependent manner. Loss of lysophospholipase D activity by addition of EDTA. Hydrolyzes lysoglycerophospholipids to produce lysophosphatidic acid (LPA) and the corresponding amines. Shows a preference for 1-O-alkyl-sn-glycero-3-phosphocholine (lyso-PAF), lysophosphatidylethanolamine (lyso-PE) and lysophosphatidylcholine (lyso-PC). May be involved in bioactive N-acylethanolamine biosynthesis from both N-acyl-lysoplasmenylethanolamin (N-acyl-lysoPlsEt) and N-acyl-lysophosphatidylethanolamin (N-acyl-lysoPE). In addition, hydrolyzes glycerophospho-N-acylethanolamine to N-acylethanolamine. Does not display glycerophosphodiester phosphodiesterase activity, since it cannot hydrolyze either glycerophosphoinositol or glycerophosphocholine. The sequence is that of Lysophospholipase D GDPD1 from Rattus norvegicus (Rat).